The primary structure comprises 51 residues: Glutamate dehydrogenase (51 aa).

K31 contributes to the substrate binding site.

The protein belongs to the Glu/Leu/Phe/Val dehydrogenases family. Homohexamer.

Its subcellular location is the mitochondrion matrix. It catalyses the reaction L-glutamate + NAD(+) + H2O = 2-oxoglutarate + NH4(+) + NADH + H(+). It carries out the reaction L-glutamate + NADP(+) + H2O = 2-oxoglutarate + NH4(+) + NADPH + H(+). Its function is as follows. Mitochondrial glutamate dehydrogenase that converts L-glutamate into alpha-ketoglutarate. Plays a key role in glutamine anaplerosis by producing alpha-ketoglutarate, an important intermediate in the tricarboxylic acid cycle. This chain is Glutamate dehydrogenase, found in Electrophorus electricus (Electric eel).